The following is a 259-amino-acid chain: Phosphate import ATP-binding protein PstB 2 (259 aa).

Positions 12–254 (ISARGLNVHY…PKEPLTQGYI (243 aa)) constitute an ABC transporter domain. Position 44-51 (44-51 (GPSGCGKS)) interacts with ATP.

Belongs to the ABC transporter superfamily. Phosphate importer (TC 3.A.1.7) family. The complex is composed of two ATP-binding proteins (PstB), two transmembrane proteins (PstC and PstA) and a solute-binding protein (PstS).

The protein localises to the cell inner membrane. It carries out the reaction phosphate(out) + ATP + H2O = ADP + 2 phosphate(in) + H(+). Part of the ABC transporter complex PstSACB involved in phosphate import. Responsible for energy coupling to the transport system. The polypeptide is Phosphate import ATP-binding protein PstB 2 (Paramagnetospirillum magneticum (strain ATCC 700264 / AMB-1) (Magnetospirillum magneticum)).